Here is a 330-residue protein sequence, read N- to C-terminus: Urokinase plasminogen activator surface receptor (330 aa).

The N-terminal stretch at 1-20 is a signal peptide; that stretch reads MGQPLLLLLLVYTYIPGSWG. 3 consecutive UPAR/Ly6 domains span residues 21-112, 113-208, and 209-300; these read LRCL…RNRY, LECA…PPNG, and LQCY…PGKG. 3 disulfides stabilise this stretch: Cys23/Cys44, Cys26/Cys32, and Cys37/Cys65. Asn28 is a glycosylation site (N-linked (GlcNAc...) asparagine). Asn72 is a glycosylation site (N-linked (GlcNAc...) asparagine). 11 disulfides stabilise this stretch: Cys91–Cys96, Cys115–Cys142, Cys118–Cys125, Cys135–Cys164, Cys170–Cys187, Cys188–Cys193, Cys211–Cys239, Cys214–Cys222, Cys232–Cys258, Cys264–Cys282, and Cys283–Cys288. N-linked (GlcNAc...) asparagine glycans are attached at residues Asn179 and Asn189. Asn279 is a glycosylation site (N-linked (GlcNAc...) asparagine). Gly300 carries the GPI-anchor amidated glycine lipid modification. The propeptide at 301 to 330 is removed in mature form; sequence GAPKTSPAHLSFFVSLLLTARLWGATLLCT.

As to quaternary structure, monomer. Interacts (via the UPAR/Ly6 domains) with SRPX2. Interacts with MRC2. Interacts with SORL1 (via N-terminal ectodomain); this interaction decreases PLAUR internalization. The ternary complex composed of PLAUR-PLAU-SERPINE1 also interacts with SORL1. Interacts with CD82; this interaction prevents PLAUR from binding to its high affinity ligand PLAU.

Its subcellular location is the cell membrane. Its function is as follows. Acts as a receptor for urokinase plasminogen activator. Plays a role in localizing and promoting plasmin formation. Mediates the proteolysis-independent signal transduction activation effects of U-PA. The polypeptide is Urokinase plasminogen activator surface receptor (PLAUR) (Bos taurus (Bovine)).